The primary structure comprises 83 residues: Small ribosomal subunit protein uS19m (83 aa).

Belongs to the universal ribosomal protein uS19 family.

The protein localises to the mitochondrion. In Tetraselmis subcordiformis (Marine green alga), this protein is Small ribosomal subunit protein uS19m (RPS19).